Reading from the N-terminus, the 286-residue chain is GTP cyclohydrolase 1 type 2 homolog (286 aa).

His66, His67, Asp103, His254, and Glu258 together coordinate a divalent metal cation.

This sequence belongs to the GTP cyclohydrolase I type 2/NIF3 family. As to quaternary structure, homohexamer.

The chain is GTP cyclohydrolase 1 type 2 homolog from Treponema pallidum (strain Nichols).